The sequence spans 1279 residues: Botulinum-like toxin eBoNT/J (1279 aa).

H225 contributes to the Zn(2+) binding site. E226 is an active-site residue. H229 and E269 together coordinate Zn(2+). C424 and C438 are joined by a disulfide. The tract at residues 435-843 (LSSCIEILED…RLTSLPVFNL (409 aa)) is translocation domain (TD). The segment at 476 to 525 (ADTILDSTLSNYDFSKEINFTSTVPIITVEDPLETDEDVPVISEDRTVYV) is belt; not required for channel formation. Positions 860–1080 (IDIQDSEVLN…EVNRLYWKYF (221 aa)) are N-terminus of receptor binding domain (N-RBD). Residues 1081 to 1279 (EGSYLRDVWG…IPVDEGWKED (199 aa)) are C-terminus of receptor binding domain (C-RBD). A Host ganglioside-binding motif motif is present at residues 1250–1253 (SAWY).

This sequence belongs to the peptidase M27 family. As to quaternary structure, might be a disulfide-linked heterodimer of a light chain (LC) and heavy chain (HC). The cofactor is Zn(2+).

Its subcellular location is the secreted. The protein resides in the host cytoplasm. It is found in the host cytosol. It localises to the host cell membrane. The protein localises to the host cytoplasmic vesicle membrane. It catalyses the reaction Limited hydrolysis of proteins of the neuroexocytosis apparatus, synaptobrevins, SNAP25 or syntaxin. No detected action on small molecule substrates.. Strongly resembles a botulinum-type toxin, with the appropriate domains and residues to have proteolytic function, although its C-terminus (which binds to a eukaryotic host cell) is different enough from clostrial botulinum toxins that it might bind another cell target. Might be a precursor of a toxin that binds to an unknown eukaryotic cell receptor(s), and be taken up into the host cell via the endocytic pathway. When the pH of the putative toxin-containing endosome drops a structural rearrangement occurs so that the N-terminus of the heavy chain forms pores that allows the light chain to translocate into the cytosol. Once in the cytosol the disulfide bond linking the 2 subunits is reduced and light chain cleaves its target protein. This chain is Botulinum-like toxin eBoNT/J, found in Enterococcus sp. (strain 3G1_DIV0629).